A 444-amino-acid polypeptide reads, in one-letter code: Inward rectifier potassium channel 4 (444 aa).

Residues 1–55 lie on the Cytoplasmic side of the membrane; it reads MHGHNRNGQAHVPRRKRRNRFVKKNGQCNVYFANLSNKSQRYMADIFTTCVDTRW. A helical membrane pass occupies residues 56–80; sequence RYMLMLFSAAFLVSWLFFGLLFWCI. The Extracellular segment spans residues 81–119; that stretch reads AFFHGDLEASPSVPAAGAPGGNGGAAPAAPKPCIMHVNG. Positions 120 to 131 form an intramembrane region, helical; Pore-forming; it reads FLGAFLFSVETQ. Residues 132 to 138 constitute an intramembrane region (pore-forming); that stretch reads TTIGYGF. The short motif at 133 to 138 is the Selectivity filter element; that stretch reads TIGYGF. Over 139–147 the chain is Extracellular; sequence RCVTEECPL. Residues 148–169 traverse the membrane as a helical segment; the sequence is AVIAVVVQSIVGCVIDSFMIGT. Residues 170–444 lie on the Cytoplasmic side of the membrane; the sequence is IMAKMARPKK…NISYRRESAI (275 aa). The PDZ-binding motif lies at 442–444; the sequence is SAI.

The protein belongs to the inward rectifier-type potassium channel (TC 1.A.2.1) family. KCNJ4 subfamily. Homomultimeric and heteromultimeric association with KCNJ2 and KCNJ12. Interacts with DLG2 and DLG4. Associates, via its PDZ-recognition domain, with a complex containing LIN7A, LIN7B, LIN7C, DLG1, CASK and APBA1. Interacts with TAX1BP3. TAX1BP3 competes with LIN7 family members for KCNJ4 binding.

It is found in the cell membrane. It localises to the postsynaptic cell membrane. The protein resides in the cytoplasmic vesicle membrane. The catalysed reaction is K(+)(in) = K(+)(out). Its function is as follows. Inward rectifier potassium channels are characterized by a greater tendency to allow potassium to flow into the cell rather than out of it. Their voltage dependence is regulated by the concentration of extracellular potassium; as external potassium is raised, the voltage range of the channel opening shifts to more positive voltages. The inward rectification is mainly due to the blockage of outward current by internal magnesium. Can be blocked by extracellular barium and cesium. This chain is Inward rectifier potassium channel 4 (KCNJ4), found in Mesocricetus auratus (Golden hamster).